Here is a 497-residue protein sequence, read N- to C-terminus: MTNKYLVEGSENELTTKTAAELAGLIHSREVTSREVTQAHLDRIAAVDGDIHAFLHVGQEEALNAADDVDKRLDAGEAPASALAGVPLALKDVFTTTDAPTTAASKMLEGYMSPYDATVTRKIREAGIPILGKTNMDEFAMGSSTENSAYGPTHNPWDLERTAGGSGGGSSAALAAGQAPLAIGTDTGGSIRQPAALTNTVGVKPTYGTVSRYGLIACASSLDQGGPTARTVLDTALLHEVIAGHDAFDATSVNRPVAPVVQAAREGANGDLKGVKVGVVKQFDRDGYQPGVLEAFHASVEQMRSQGAEIVEVDCPHFDDALGAYYLILPCEVSSNLARFDGMRYGLRAGDDGTRSADEVMAYTRAQGFGPEVKRRIILGTYALSVGYYDAYYLQAQRVRTLIAQDFAKAYEQVDILVSPTTPTTAFKLGEKVTDPLEMYNFDLCTLPLNLAGLAGMSLPSGLASDTGLPVGLQLMAPAFQDDRLYRVGAAFEAGRK.

Catalysis depends on charge relay system residues Lys-91 and Ser-166. Residues 143-171 (SSTENSAYGPTHNPWDLERTAGGSGGGSS) are disordered. The Acyl-ester intermediate role is filled by Ser-190.

Belongs to the amidase family. GatA subfamily. As to quaternary structure, heterotrimer of A, B and C subunits.

It carries out the reaction L-glutamyl-tRNA(Gln) + L-glutamine + ATP + H2O = L-glutaminyl-tRNA(Gln) + L-glutamate + ADP + phosphate + H(+). In terms of biological role, allows the formation of correctly charged Gln-tRNA(Gln) through the transamidation of misacylated Glu-tRNA(Gln) in organisms which lack glutaminyl-tRNA synthetase. The reaction takes place in the presence of glutamine and ATP through an activated gamma-phospho-Glu-tRNA(Gln). The polypeptide is Glutamyl-tRNA(Gln) amidotransferase subunit A (Corynebacterium glutamicum (strain ATCC 13032 / DSM 20300 / JCM 1318 / BCRC 11384 / CCUG 27702 / LMG 3730 / NBRC 12168 / NCIMB 10025 / NRRL B-2784 / 534)).